Here is a 144-residue protein sequence, read N- to C-terminus: UPF0547 protein C16orf87 homolog (144 aa).

Residues His-33 to Val-112 are disordered. Residues Lys-35–Glu-45 show a composition bias toward polar residues. Over residues Pro-50–Arg-62 the composition is skewed to basic residues. Composition is skewed to basic and acidic residues over residues Ile-63 to Arg-74 and Lys-99 to Val-112. Residues Lys-94–Lys-122 are a coiled coil.

This sequence belongs to the UPF0547 family.

In Xenopus laevis (African clawed frog), this protein is UPF0547 protein C16orf87 homolog.